A 1200-amino-acid polypeptide reads, in one-letter code: Chromosome partition protein Smc (1200 aa).

32–39 (PNGCGKSN) provides a ligand contact to ATP. Coiled coils occupy residues 171–219 (VTKY…AEKY) and 252–342 (LENL…MSEA). An SMC hinge domain is found at 528-644 (QGIFGLVADV…QDVATARAWT (117 aa)). Coiled-coil stretches lie at residues 679–706 (ALQKKREIAELATEVARVEERYNEILTR) and 735–762 (LASQEKDLHKAGEDLARVRERVRALEVE). The disordered stretch occupies residues 763-795 (EGQLTQSHQALEHEEEASRGEVAHGQADREGRE). Basic and acidic residues predominate over residues 772-795 (ALEHEEEASRGEVAHGQADREGRE). A coiled-coil region spans residues 1002–1039 (HAELSKRYDFLTAQKKDLQSSIEQLKEAIQRIDATSRE).

Belongs to the SMC family. Homodimer. Probably forms the Structural Maintenance of Chromosome (SMC) condensin-like complex with ScpA and ScpB.

It localises to the cytoplasm. A conditionally essential component of the chromosome segregation machinery. Required for chromosome condensation and partitioning. Important for positioning of ParB-parS complexes (ori of replication) and of the ter replication site, as well as for segration of the ParB-parS complex and thus chromosome segregation. May act via the formation of a condensin-like complex containing Smc, ScpA and ScpB that pulls DNA away from mid-cell into both cell halves. The sequence is that of Chromosome partition protein Smc from Myxococcus xanthus (strain DK1622).